The primary structure comprises 171 residues: Pro-corazonin (171 aa).

The N-terminal stretch at 1–20 (MLHTRTIALLLVGLVVLVNA) is a signal peptide. At Q21 the chain carries Pyrrolidone carboxylic acid. At N31 the chain carries Asparagine amide. Residues 82–171 (FLRNPCDLRV…GFSDHRQKIA (90 aa)) constitute a propeptide that is removed on maturation.

This sequence belongs to the corazonin family.

The protein localises to the secreted. Its function is as follows. Cardioactive peptide. Corazonin is probably involved in the physiological regulation of the heart beat. The sequence is that of Pro-corazonin from Anopheles gambiae (African malaria mosquito).